Consider the following 204-residue polypeptide: NNYCKIKCLKGGVHTACKYGSLKPNCGNKIVVSYGLTKEEKQDILKEHNDFRQKIARGLETRGNPGPQPPAKNMKNLVWNDELAYVAQVWANQCQYGHDTCRDVAKYPVGQNVALTGSTADKYDNPVKLVKMWEDEVKDYNPKKKFSENNFNKIGHYTQMVWANTKEIGCGSIKYIQNEWHKHYLVCNYGPSGNFGNEELYQTK.

4 disulfide bridges follow: Cys-4/Cys-17, Cys-8/Cys-101, Cys-26/Cys-94, and Cys-170/Cys-187. In terms of domain architecture, SCP spans 45-189 (LKEHNDFRQK…WHKHYLVCNY (145 aa)).

The protein belongs to the CRISP family. Venom allergen 5-like subfamily. In terms of tissue distribution, expressed by the venom gland.

The protein localises to the secreted. This chain is Venom allergen 5, found in Vespula pensylvanica (Western yellow jacket).